The following is a 298-amino-acid chain: Tyrosine recombinase XerD (298 aa).

One can recognise a Core-binding (CB) domain in the interval threonine 3–leucine 88. In terms of domain architecture, Tyr recombinase spans proline 109–alanine 292. Residues arginine 149, lysine 173, histidine 244, arginine 247, and histidine 270 contribute to the active site. The O-(3'-phospho-DNA)-tyrosine intermediate role is filled by tyrosine 279.

It belongs to the 'phage' integrase family. XerD subfamily. In terms of assembly, forms a cyclic heterotetrameric complex composed of two molecules of XerC and two molecules of XerD.

It localises to the cytoplasm. In terms of biological role, site-specific tyrosine recombinase, which acts by catalyzing the cutting and rejoining of the recombining DNA molecules. The XerC-XerD complex is essential to convert dimers of the bacterial chromosome into monomers to permit their segregation at cell division. It also contributes to the segregational stability of plasmids. The polypeptide is Tyrosine recombinase XerD (Pseudomonas aeruginosa (strain ATCC 15692 / DSM 22644 / CIP 104116 / JCM 14847 / LMG 12228 / 1C / PRS 101 / PAO1)).